The following is a 259-amino-acid chain: Pimeloyl-[acyl-carrier protein] methyl ester esterase (259 aa).

The AB hydrolase-1 domain maps to 15–242; sequence HLVLLHGWGL…AAHAPFISHP (228 aa). Residues Trp22, 82–83, and 143–147 each bind substrate; these read SL and FLALQ. The Nucleophile role is filled by Ser82. Catalysis depends on residues Asp207 and His235. His235 is a binding site for substrate.

Belongs to the AB hydrolase superfamily. Carboxylesterase BioH family. In terms of assembly, monomer.

Its subcellular location is the cytoplasm. The enzyme catalyses 6-carboxyhexanoyl-[ACP] methyl ester + H2O = 6-carboxyhexanoyl-[ACP] + methanol + H(+). It participates in cofactor biosynthesis; biotin biosynthesis. Functionally, the physiological role of BioH is to remove the methyl group introduced by BioC when the pimeloyl moiety is complete. It allows to synthesize pimeloyl-ACP via the fatty acid synthetic pathway through the hydrolysis of the ester bonds of pimeloyl-ACP esters. The chain is Pimeloyl-[acyl-carrier protein] methyl ester esterase from Cronobacter sakazakii (strain ATCC BAA-894) (Enterobacter sakazakii).